A 73-amino-acid chain; its full sequence is UPF0346 protein SAS1364 (73 aa).

Belongs to the UPF0346 family.

The chain is UPF0346 protein SAS1364 from Staphylococcus aureus (strain MSSA476).